Reading from the N-terminus, the 607-residue chain is Elongation factor 4 (607 aa).

In terms of domain architecture, tr-type G spans 11–193 (ENIRNFSIIA…KIVEVVPAPD (183 aa)). GTP contacts are provided by residues 23-28 (DHGKST) and 140-143 (NKID).

The protein belongs to the TRAFAC class translation factor GTPase superfamily. Classic translation factor GTPase family. LepA subfamily.

It localises to the cell membrane. It catalyses the reaction GTP + H2O = GDP + phosphate + H(+). In terms of biological role, required for accurate and efficient protein synthesis under certain stress conditions. May act as a fidelity factor of the translation reaction, by catalyzing a one-codon backward translocation of tRNAs on improperly translocated ribosomes. Back-translocation proceeds from a post-translocation (POST) complex to a pre-translocation (PRE) complex, thus giving elongation factor G a second chance to translocate the tRNAs correctly. Binds to ribosomes in a GTP-dependent manner. The polypeptide is Elongation factor 4 (Staphylococcus aureus (strain N315)).